The primary structure comprises 362 residues: Peptide chain release factor 1 (362 aa).

N5-methylglutamine is present on glutamine 237. Positions 284-295 (EEEKRQAEETST) are enriched in basic and acidic residues. A disordered region spans residues 284-304 (EEEKRQAEETSTRRNLVASGD).

It belongs to the prokaryotic/mitochondrial release factor family. Methylated by PrmC. Methylation increases the termination efficiency of RF1.

It is found in the cytoplasm. Peptide chain release factor 1 directs the termination of translation in response to the peptide chain termination codons UAG and UAA. The sequence is that of Peptide chain release factor 1 from Pseudoalteromonas atlantica (strain T6c / ATCC BAA-1087).